The following is a 423-amino-acid chain: Replication factor C large subunit (423 aa).

50–57 is a binding site for ATP; it reads GPAGCGKT.

It belongs to the activator 1 small subunits family. RfcL subfamily. In terms of assembly, heteromultimer composed of small subunits (RfcS) and large subunits (RfcL).

In terms of biological role, part of the RFC clamp loader complex which loads the PCNA sliding clamp onto DNA. The protein is Replication factor C large subunit of Staphylothermus marinus (strain ATCC 43588 / DSM 3639 / JCM 9404 / F1).